Here is a 194-residue protein sequence, read N- to C-terminus: Recombination protein RecR (194 aa).

A C4-type zinc finger spans residues 55–70 (CRECGNLAEGELCPIC). Residues 78-171 (SLLAVVESVA…RVTRPAYGLP (94 aa)) form the Toprim domain.

This sequence belongs to the RecR family.

Its function is as follows. May play a role in DNA repair. It seems to be involved in an RecBC-independent recombinational process of DNA repair. It may act with RecF and RecO. The polypeptide is Recombination protein RecR (Thermus thermophilus (strain ATCC 27634 / DSM 579 / HB8)).